The sequence spans 511 residues: 2,3-bisphosphoglycerate-independent phosphoglycerate mutase (511 aa).

Residue aspartate 12 participates in Mn(2+) binding. Tyrosine 36 carries the post-translational modification Phosphotyrosine. Residue serine 62 participates in Mn(2+) binding. The Phosphoserine intermediate role is filled by serine 62. Substrate is bound by residues histidine 123, 153-154, arginine 185, arginine 191, 261-264, and lysine 336; these read RD and RPDR. The Mn(2+) site is built by aspartate 403, histidine 407, aspartate 444, histidine 445, and histidine 462.

The protein belongs to the BPG-independent phosphoglycerate mutase family. In terms of assembly, monomer. The cofactor is Mn(2+).

It carries out the reaction (2R)-2-phosphoglycerate = (2R)-3-phosphoglycerate. It functions in the pathway carbohydrate degradation; glycolysis; pyruvate from D-glyceraldehyde 3-phosphate: step 3/5. In terms of biological role, catalyzes the interconversion of 2-phosphoglycerate and 3-phosphoglycerate. This is 2,3-bisphosphoglycerate-independent phosphoglycerate mutase from Geobacillus thermodenitrificans (strain NG80-2).